Reading from the N-terminus, the 260-residue chain is Methionine-rich nacre protein (260 aa).

A signal peptide spans 1-19 (MRRILCLAVVIFIINDVSS). The tract at residues 23-75 (GSNKNWKKSGMSLSSPGNKKPTGNNNAVPQKSKMNNVNQNSLSQPKRPSHPGN) is disordered. A compositionally biased stretch (polar residues) spans 33–68 (MSLSSPGNKKPTGNNNAVPQKSKMNNVNQNSLSQPK).

Expressed in mantle distal zone, mantle margin and grafted pearl pockets. Not expressed in adductor muscle, gills, hemocytes or ungrafted pearl pockets. Within the mantle, specifically expressed in mineralizing outer epithelium cells (at protein level). After secretion incorporated into acid-insoluble nacre matrix of shell and pearl (at protein level). Not found in acid-insoluble matrix of shell prisms (at protein level).

Its subcellular location is the secreted. This is Methionine-rich nacre protein from Margaritifera margaritifera (Freshwater pearl mussel).